A 316-amino-acid chain; its full sequence is MANLKEIRDRIVSVKNTRKITEAMRLVAAAKVRRAQDQVLKSRPFADKLARVLENIQSRVQFEAVDSPLLSKREVKSISLVCITADRGLCGGYNTNIIKKVEIRYAELIKQGYEPNLILVGKKAIGYFQNRKDKYVIKSTFKELEQVPTAIDSEGITNEVLAEFLSENSDRVEIIYTKFITLVSCAPVVQTLLPLDPQGIAQENDEIFRLTTKNSKLLVEKSNLEKNESDRLPSDIVFEQSPDQLLDSLLPLYLQNQILRALQESAASELACRMTAMNNASDNAKELASTLNLTYNKARQAAITQEILEVVGGSAV.

The protein belongs to the ATPase gamma chain family. As to quaternary structure, F-type ATPases have 2 components, CF(1) - the catalytic core - and CF(0) - the membrane proton channel. CF(1) has five subunits: alpha(3), beta(3), gamma(1), delta(1), epsilon(1). CF(0) has three main subunits: a, b and c.

The protein localises to the cellular thylakoid membrane. In terms of biological role, produces ATP from ADP in the presence of a proton gradient across the membrane. The gamma chain is believed to be important in regulating ATPase activity and the flow of protons through the CF(0) complex. The sequence is that of ATP synthase gamma chain from Prochlorococcus marinus (strain MIT 9515).